Here is a 283-residue protein sequence, read N- to C-terminus: Probable endonuclease 4 (283 aa).

Positions 69, 109, 145, 179, 182, 216, 229, 231, and 261 each coordinate Zn(2+).

It belongs to the AP endonuclease 2 family. It depends on Zn(2+) as a cofactor.

It catalyses the reaction Endonucleolytic cleavage to 5'-phosphooligonucleotide end-products.. Endonuclease IV plays a role in DNA repair. It cleaves phosphodiester bonds at apurinic or apyrimidinic (AP) sites, generating a 3'-hydroxyl group and a 5'-terminal sugar phosphate. In Prosthecochloris aestuarii (strain DSM 271 / SK 413), this protein is Probable endonuclease 4.